Reading from the N-terminus, the 923-residue chain is Meiotic recombination protein rec11 (923 aa).

Positions 278-365 (LFSRIHDIRA…DRFSLRIVEI (88 aa)) constitute an SCD domain.

This chain is Meiotic recombination protein rec11 (rec11), found in Schizosaccharomyces pombe (strain 972 / ATCC 24843) (Fission yeast).